Consider the following 314-residue polypeptide: DNA-directed RNA polymerase subunit alpha (314 aa).

The tract at residues 1 to 228 is alpha N-terminal domain (alpha-NTD); the sequence is MAQFHYECVE…SLFEPLKDIT (228 aa). The interval 240 to 314 is alpha C-terminal domain (alpha-CTD); that stretch reads DPTSQIPIEE…LPQEKVAKAT (75 aa).

The protein belongs to the RNA polymerase alpha chain family. In cyanobacteria the RNAP catalytic core is composed of 2 alpha, 1 beta, 1 beta', 1 gamma and 1 omega subunit. When a sigma factor is associated with the core the holoenzyme is formed, which can initiate transcription.

The catalysed reaction is RNA(n) + a ribonucleoside 5'-triphosphate = RNA(n+1) + diphosphate. Functionally, DNA-dependent RNA polymerase catalyzes the transcription of DNA into RNA using the four ribonucleoside triphosphates as substrates. This chain is DNA-directed RNA polymerase subunit alpha, found in Trichodesmium erythraeum (strain IMS101).